Here is a 255-residue protein sequence, read N- to C-terminus: Adenylate dimethylallyltransferase (255 aa).

This sequence belongs to the isopentenyl transferase family.

The enzyme catalyses dimethylallyl diphosphate + AMP = N(6)-(dimethylallyl)adenosine 5'-phosphate + diphosphate. Transfers dimethylallyl groups to AMP as part of the biosynthesis of cytokinin phytohormones. In Rhodococcoides fascians (Rhodococcus fascians), this protein is Adenylate dimethylallyltransferase (fas4).